A 268-amino-acid polypeptide reads, in one-letter code: uncharacterized protein (268 aa).

This is an uncharacterized protein from Acanthamoeba polyphaga mimivirus (APMV).